The primary structure comprises 440 residues: Thymidine phosphorylase (440 aa).

Belongs to the thymidine/pyrimidine-nucleoside phosphorylase family. As to quaternary structure, homodimer.

The enzyme catalyses thymidine + phosphate = 2-deoxy-alpha-D-ribose 1-phosphate + thymine. It participates in pyrimidine metabolism; dTMP biosynthesis via salvage pathway; dTMP from thymine: step 1/2. Its function is as follows. The enzymes which catalyze the reversible phosphorolysis of pyrimidine nucleosides are involved in the degradation of these compounds and in their utilization as carbon and energy sources, or in the rescue of pyrimidine bases for nucleotide synthesis. In Shigella dysenteriae serotype 1 (strain Sd197), this protein is Thymidine phosphorylase.